The chain runs to 425 residues: Glutamate-1-semialdehyde 2,1-aminomutase (425 aa).

The residue at position 265 (Lys-265) is an N6-(pyridoxal phosphate)lysine.

The protein belongs to the class-III pyridoxal-phosphate-dependent aminotransferase family. HemL subfamily. As to quaternary structure, homodimer. Requires pyridoxal 5'-phosphate as cofactor.

It is found in the cytoplasm. It catalyses the reaction (S)-4-amino-5-oxopentanoate = 5-aminolevulinate. It participates in porphyrin-containing compound metabolism; protoporphyrin-IX biosynthesis; 5-aminolevulinate from L-glutamyl-tRNA(Glu): step 2/2. In Clostridium perfringens (strain ATCC 13124 / DSM 756 / JCM 1290 / NCIMB 6125 / NCTC 8237 / Type A), this protein is Glutamate-1-semialdehyde 2,1-aminomutase.